Consider the following 117-residue polypeptide: MPRPYKCRRISEIPKVAYYKPAGIPLSLLEENQLSTEEAEALRLKDLLGLEQAEAARQMNISRPTFQRMLYSARYKVADALLKGKALRIEGGVFELDARPCCQRQIPPSQTDPPGQT.

It belongs to the UPF0251 family.

The polypeptide is UPF0251 protein DET0218 (Dehalococcoides mccartyi (strain ATCC BAA-2266 / KCTC 15142 / 195) (Dehalococcoides ethenogenes (strain 195))).